We begin with the raw amino-acid sequence, 350 residues long: Lipoyl synthase (350 aa).

The segment at 1-39 (MSDTSSPKPVASGEKFRTAQGITAIKDGQKRRASAEPQV) is disordered. Residues Cys73, Cys78, Cys84, Cys99, Cys103, Cys106, and Ser314 each contribute to the [4Fe-4S] cluster site. A Radical SAM core domain is found at 85–303 (WSNGTATIML…RDIGLEKGFM (219 aa)).

It belongs to the radical SAM superfamily. Lipoyl synthase family. It depends on [4Fe-4S] cluster as a cofactor.

The protein resides in the cytoplasm. It catalyses the reaction [[Fe-S] cluster scaffold protein carrying a second [4Fe-4S](2+) cluster] + N(6)-octanoyl-L-lysyl-[protein] + 2 oxidized [2Fe-2S]-[ferredoxin] + 2 S-adenosyl-L-methionine + 4 H(+) = [[Fe-S] cluster scaffold protein] + N(6)-[(R)-dihydrolipoyl]-L-lysyl-[protein] + 4 Fe(3+) + 2 hydrogen sulfide + 2 5'-deoxyadenosine + 2 L-methionine + 2 reduced [2Fe-2S]-[ferredoxin]. Its pathway is protein modification; protein lipoylation via endogenous pathway; protein N(6)-(lipoyl)lysine from octanoyl-[acyl-carrier-protein]: step 2/2. Functionally, catalyzes the radical-mediated insertion of two sulfur atoms into the C-6 and C-8 positions of the octanoyl moiety bound to the lipoyl domains of lipoate-dependent enzymes, thereby converting the octanoylated domains into lipoylated derivatives. The protein is Lipoyl synthase of Ectopseudomonas mendocina (strain ymp) (Pseudomonas mendocina).